The sequence spans 1049 residues: Self-sufficient cytochrome P450 monooxygenase CYP505E4 (1049 aa).

Cysteine 405 contacts heme. A compositionally biased stretch (polar residues) spans serine 461–methionine 470. The tract at residues serine 461–glutamine 491 is disordered. The segment covering serine 471 to threonine 482 has biased composition (low complexity). One can recognise a Flavodoxin-like domain in the interval isoleucine 499–leucine 640. FMN is bound by residues serine 505–threonine 509 and valine 584–threonine 616. The FAD-binding FR-type domain maps to arginine 678–proline 906.

This sequence in the N-terminal section; belongs to the cytochrome P450 family. The cofactor is FAD. It depends on FMN as a cofactor. Heme serves as cofactor.

It catalyses the reaction 2 oxidized [cytochrome P450] + NADPH = 2 reduced [cytochrome P450] + NADP(+) + H(+). It carries out the reaction an organic molecule + reduced [NADPH--hemoprotein reductase] + O2 = an alcohol + oxidized [NADPH--hemoprotein reductase] + H2O + H(+). The enzyme catalyses dodecanoate + reduced [NADPH--hemoprotein reductase] + O2 = 5-hydroxydodecanoate + oxidized [NADPH--hemoprotein reductase] + H2O + H(+). The catalysed reaction is dodecan-1-ol + reduced [NADPH--hemoprotein reductase] + O2 = 1,5-dodecanediol + oxidized [NADPH--hemoprotein reductase] + H2O + H(+). It catalyses the reaction dodecanoate + reduced [NADPH--hemoprotein reductase] + O2 = 9-hydroxydodecanoate + oxidized [NADPH--hemoprotein reductase] + H2O + H(+). It carries out the reaction dodecan-1-ol + reduced [NADPH--hemoprotein reductase] + O2 = 1,4-dodecanediol + oxidized [NADPH--hemoprotein reductase] + H2O + H(+). The enzyme catalyses dodecan-1-ol + reduced [NADPH--hemoprotein reductase] + O2 = 1,6-dodecanediol + oxidized [NADPH--hemoprotein reductase] + H2O + H(+). Its function is as follows. Self-sufficient cytochrome P450 monooxygenase that catalyzes the regioselective in-chain hydroxylation of alkanes, fatty alcohols, and fatty acids at the omega-7 position. Performs hydroxylation of C10-C16 n-alkanes and C12 and C14 fatty alcohols; and thereby enables the one step biocatalytic synthesis of rare alcohols such as 5-dodecanol and 7-tetradecanol. Converts 1-dodecanol into 1,5-dodecanediol as major product with very little sub-terminally hydroxylated products with the 1,4-dodecanediol and 1,6-dodecanediol more abundant. Converts dodecanoic acid to 5-hydroxydodecanoic acid which can be further converted into delta-dodecalactone by lactonization of the 5-hydroxy acid at low pH. Also gives sub-terminal hydroxylation of dodecanoic acid with 9-hydroxydodecanoic acid being the second most abundant product. Does not show any significant activity toward tetradecanoic acid. The chain is Self-sufficient cytochrome P450 monooxygenase CYP505E4 from Penicillium camemberti (strain FM 013).